Here is a 374-residue protein sequence, read N- to C-terminus: Putative glutamate--cysteine ligase 2 (374 aa).

It belongs to the glutamate--cysteine ligase type 2 family. YbdK subfamily.

The enzyme catalyses L-cysteine + L-glutamate + ATP = gamma-L-glutamyl-L-cysteine + ADP + phosphate + H(+). Its function is as follows. ATP-dependent carboxylate-amine ligase which exhibits weak glutamate--cysteine ligase activity. This chain is Putative glutamate--cysteine ligase 2, found in Verminephrobacter eiseniae (strain EF01-2).